A 75-amino-acid polypeptide reads, in one-letter code: Alpha-elapitoxin-Bc2c (75 aa).

A signal peptide spans 1–2 (YT). 5 disulfides stabilise this stretch: Cys-5-Cys-24, Cys-17-Cys-45, Cys-30-Cys-34, Cys-49-Cys-60, and Cys-61-Cys-66.

The protein belongs to the three-finger toxin family. Long-chain subfamily. Type II alpha-neurotoxin sub-subfamily. Monomer in solution, homodimer in crystal state. In terms of tissue distribution, expressed by the venom gland.

The protein resides in the secreted. Its function is as follows. Binds to muscular and neuronal nicotinic acetylcholine receptor (nAChR) and inhibits acetylcholine from binding to the receptor, thereby impairing neuromuscular and neuronal transmission. Blocks muscle type nAChR. Also binds with high affinity to alpha-7/CHRNA7 nAChRs. In addition, shows a weak inhibition of neuronal alpha-3-beta-2/CHRNA3-CHRNB2 nAChR. Selectively binds to alpha-1-delta subunit interface of the mouse muscle nicotinic acetylcholine receptor, with a 10-fold higher affinity for the adult than for the fetal receptors. In vivo, when intraperitoneally injected into mice, causes flaccid paralysis and respiratory distress, followed by death within 2-4 hours. This is Alpha-elapitoxin-Bc2c from Bungarus candidus (Malayan krait).